A 459-amino-acid polypeptide reads, in one-letter code: Alcohol acyl transferase 1 allele RGc (459 aa).

Catalysis depends on proton acceptor residues histidine 164 and asparagine 385.

The protein belongs to the plant acyltransferase family. In terms of tissue distribution, expressed at very low levels in the skin of ripe fruit.

In terms of biological role, involved in the biosynthesis of volatile esters which confer ripe apple fruit flavor. Alcohol acyl transferase that can use a wide range of alcohols as substrate to produce esters. This is Alcohol acyl transferase 1 allele RGc from Malus domestica (Apple).